Here is a 214-residue protein sequence, read N- to C-terminus: 3-isopropylmalate dehydratase small subunit (214 aa).

It belongs to the LeuD family. LeuD type 1 subfamily. In terms of assembly, heterodimer of LeuC and LeuD.

The catalysed reaction is (2R,3S)-3-isopropylmalate = (2S)-2-isopropylmalate. The protein operates within amino-acid biosynthesis; L-leucine biosynthesis; L-leucine from 3-methyl-2-oxobutanoate: step 2/4. Its function is as follows. Catalyzes the isomerization between 2-isopropylmalate and 3-isopropylmalate, via the formation of 2-isopropylmaleate. This chain is 3-isopropylmalate dehydratase small subunit, found in Methylobacillus flagellatus (strain ATCC 51484 / DSM 6875 / VKM B-1610 / KT).